The chain runs to 136 residues: MVNSCCGSVCSDQGCGLENCCRPSCCQTTCCRTTCCRPSCCVSSCCRPQCCQSVCCQPTCCSPSCCQTTCCRTTCCRPSCCVSSCFRPQCCQSVYCQPTCCRPSCGQTTCCRTTCYRPSCCVSTCCRPTCSSGSCC.

20 tandem repeats follow at residues 5 to 9, 20 to 24, 25 to 29, 30 to 34, 35 to 39, 40 to 44, 45 to 49, 50 to 54, 55 to 59, 60 to 64, 65 to 69, 70 to 74, 75 to 79, 80 to 84, 90 to 94, 95 to 99, 100 to 104, 110 to 114, 120 to 124, and 125 to 129. Residues 5 to 129 are 20 X 5 AA repeats OF C-C-[GRQVS]-[SPT]-[VSTQ]; sequence CCGSVCSDQG…CCVSTCCRPT (125 aa).

This sequence belongs to the KRTAP type 4 family. Interacts with hair keratins.

In the hair cortex, hair keratin intermediate filaments are embedded in an interfilamentous matrix, consisting of hair keratin-associated proteins (KRTAP), which are essential for the formation of a rigid and resistant hair shaft through their extensive disulfide bond cross-linking with abundant cysteine residues of hair keratins. The matrix proteins include the high-sulfur and high-glycine-tyrosine keratins. This Homo sapiens (Human) protein is Keratin-associated protein 4-2 (KRTAP4-2).